The chain runs to 377 residues: Erythronate-4-phosphate dehydrogenase (377 aa).

2 residues coordinate substrate: Ser-45 and Thr-66. The NAD(+) site is built by Asp-146 and Thr-175. The active site involves Arg-208. Position 232 (Asp-232) interacts with NAD(+). Glu-237 is an active-site residue. Catalysis depends on His-254, which acts as the Proton donor. Gly-257 is a binding site for NAD(+). A substrate-binding site is contributed by Tyr-258.

Belongs to the D-isomer specific 2-hydroxyacid dehydrogenase family. PdxB subfamily. In terms of assembly, homodimer.

Its subcellular location is the cytoplasm. The enzyme catalyses 4-phospho-D-erythronate + NAD(+) = (R)-3-hydroxy-2-oxo-4-phosphooxybutanoate + NADH + H(+). It participates in cofactor biosynthesis; pyridoxine 5'-phosphate biosynthesis; pyridoxine 5'-phosphate from D-erythrose 4-phosphate: step 2/5. Functionally, catalyzes the oxidation of erythronate-4-phosphate to 3-hydroxy-2-oxo-4-phosphonooxybutanoate. The protein is Erythronate-4-phosphate dehydrogenase of Sodalis glossinidius (strain morsitans).